The primary structure comprises 173 residues: MPRSQRNDNFIDKSFTVMADLILKVLPTNQKAKEAFAYYRDGMSAQGDGEYAEALENYQEALRLEEDPNDRAFILYNMALVYASNGEHNRALEQYEQALALNAKMPQVLNNMAVIHHHLGSIAQEKGESDEADRRFDLAADFWSKAIRLAPNNYIEAQNWLKTTGRGSADVYL.

TPR repeat units follow at residues 35–68 (AFAYYRDGMSAQGDGEYAEALENYQEALRLEEDP), 72–105 (AFILYNMALVYASNGEHNRALEQYEQALALNAKM), and 120–153 (GSIAQEKGESDEADRRFDLAADFWSKAIRLAPNN).

This sequence belongs to the Ycf3 family.

It localises to the cellular thylakoid membrane. Its function is as follows. Essential for the assembly of the photosystem I (PSI) complex. May act as a chaperone-like factor to guide the assembly of the PSI subunits. The protein is Photosystem I assembly protein Ycf3 of Synechococcus sp. (strain RCC307).